A 257-amino-acid polypeptide reads, in one-letter code: Transcription factor MYB3 (257 aa).

HTH myb-type domains are found at residues 9–61 (KAHM…MNYL) and 62–116 (RPDL…KRKL). 2 consecutive DNA-binding regions (H-T-H motif) follow at residues 37 to 61 (WRSL…MNYL) and 89 to 112 (WSLI…NTHI). The short motif at 189 to 193 (LNLEL) is the Required for interaction with CPL1 element.

In terms of assembly, interacts with CPL1. As to expression, expressed in roots, stems, leaves, flowers and siliques.

It is found in the nucleus. The chain is Transcription factor MYB3 (MYB3) from Arabidopsis thaliana (Mouse-ear cress).